We begin with the raw amino-acid sequence, 62 residues long: Guanine nucleotide-binding protein subunit gamma (62 aa).

Cys-59 is modified (cysteine methyl ester). A lipid anchor (S-geranylgeranyl cysteine) is attached at Cys-59. Residues Ser-60–Leu-62 constitute a propeptide, removed in mature form.

Belongs to the G protein gamma family. In terms of assembly, g proteins are composed of 3 units, alpha, beta and gamma. Interacts with gpb-1 and gpb-2.

The protein localises to the cell membrane. Its function is as follows. Guanine nucleotide-binding proteins (G proteins) are involved as a modulator or transducer in various transmembrane signaling systems. The beta and gamma chains are required for the GTPase activity, for replacement of GDP by GTP, and for G protein-effector interaction. This is Guanine nucleotide-binding protein subunit gamma (gpc-1) from Caenorhabditis briggsae.